Consider the following 486-residue polypeptide: uncharacterized protein (486 aa).

A helical transmembrane segment spans residues His7–Tyr28. N-linked (GlcNAc...) asparagine; by host glycans are attached at residues Asn73, Asn83, and Asn195. Residues Glu183–Leu233 adopt a coiled-coil conformation. A disordered region spans residues Ser299–Pro329. The span at Gln300–Ser323 shows a compositional bias: polar residues. Asn461 carries N-linked (GlcNAc...) asparagine; by host glycosylation.

This sequence belongs to the asfivirus B475L family.

The protein localises to the host membrane. This is an uncharacterized protein from Ornithodoros (relapsing fever ticks).